The following is a 145-amino-acid chain: Peptide methionine sulfoxide reductase MsrB (145 aa).

Residues 4 to 127 enclose the MsrB domain; it reads SDELKQRIGE…NSAALKFIPY (124 aa). The active-site Nucleophile is the cysteine 116.

It belongs to the MsrB Met sulfoxide reductase family.

It carries out the reaction L-methionyl-[protein] + [thioredoxin]-disulfide + H2O = L-methionyl-(R)-S-oxide-[protein] + [thioredoxin]-dithiol. In Streptococcus pyogenes serotype M3 (strain ATCC BAA-595 / MGAS315), this protein is Peptide methionine sulfoxide reductase MsrB.